Here is a 219-residue protein sequence, read N- to C-terminus: Ribose-5-phosphate isomerase A (219 aa).

Residues Thr-28 to Thr-31, Asp-81 to Asp-84, and Lys-94 to Gly-97 each bind substrate. Residue Glu-103 is the Proton acceptor of the active site. Substrate is bound at residue Lys-121.

It belongs to the ribose 5-phosphate isomerase family. As to quaternary structure, homodimer.

It carries out the reaction aldehydo-D-ribose 5-phosphate = D-ribulose 5-phosphate. Its pathway is carbohydrate degradation; pentose phosphate pathway; D-ribose 5-phosphate from D-ribulose 5-phosphate (non-oxidative stage): step 1/1. Its function is as follows. Catalyzes the reversible conversion of ribose-5-phosphate to ribulose 5-phosphate. The chain is Ribose-5-phosphate isomerase A from Shewanella oneidensis (strain ATCC 700550 / JCM 31522 / CIP 106686 / LMG 19005 / NCIMB 14063 / MR-1).